A 242-amino-acid chain; its full sequence is DNA repair protein RecO (242 aa).

Belongs to the RecO family. In terms of assembly, monomer.

Functionally, involved in DNA repair and RecF pathway recombination. The polypeptide is DNA repair protein RecO (Shigella flexneri serotype 5b (strain 8401)).